Here is a 289-residue protein sequence, read N- to C-terminus: WUSCHEL-related homeobox 1 (289 aa).

Residues 1–11 show a composition bias toward low complexity; the sequence is MDHMQQQQRQQ. The segment at 1–34 is disordered; sequence MDHMQQQQRQQVGGGGGEEVAGRGGVPVCRPSGT. Residues 12 to 25 are compositionally biased toward gly residues; sequence VGGGGGEEVAGRGG. The segment at residues 31-96 is a DNA-binding region (homeobox; WUS-type); sequence PSGTRWTPTT…NHKARERQKK (66 aa).

It belongs to the WUS homeobox family. As to quaternary structure, interacts with TPR1, TPR2 and TPR3. As to expression, expressed in young leaf primordia. Expressed in branch an floral meristems. Transiently expressed in the shoot apex.

It is found in the nucleus. Transcription repressor required for the formation and development of tiller buds and panicles. Required for tiller formation and female sterility. Required for the early developmental stages of axillary meristem formation. Plays a role in maintaining the axillary premeristem zone and in promoting the formation of the axillary meristem by promoting OSH1 expression. Does not seem to be involved in maintenance of the shoot apical meristem (SAM). The protein is WUSCHEL-related homeobox 1 of Oryza sativa subsp. japonica (Rice).